A 286-amino-acid chain; its full sequence is Phosphoribosylaminoimidazole-succinocarboxamide synthase (286 aa).

This sequence belongs to the SAICAR synthetase family.

It carries out the reaction 5-amino-1-(5-phospho-D-ribosyl)imidazole-4-carboxylate + L-aspartate + ATP = (2S)-2-[5-amino-1-(5-phospho-beta-D-ribosyl)imidazole-4-carboxamido]succinate + ADP + phosphate + 2 H(+). It functions in the pathway purine metabolism; IMP biosynthesis via de novo pathway; 5-amino-1-(5-phospho-D-ribosyl)imidazole-4-carboxamide from 5-amino-1-(5-phospho-D-ribosyl)imidazole-4-carboxylate: step 1/2. The sequence is that of Phosphoribosylaminoimidazole-succinocarboxamide synthase from Mannheimia succiniciproducens (strain KCTC 0769BP / MBEL55E).